We begin with the raw amino-acid sequence, 55 residues long: GRPSARYDAPYCSQEEVRECQDDCSGNAVRDSCLCAYDPAGSPACECRCVEPWRR.

Positions 1 to 5 (GRPSA) are excised as a propeptide.

Post-translationally, contains 4 disulfide bonds. As to expression, expressed by the venom duct.

The protein resides in the secreted. Its function is as follows. Probable neurotoxin with unknown target. Possibly targets ion channels. This chain is Conotoxin Cal22d, found in Californiconus californicus (California cone).